Here is a 1488-residue protein sequence, read N- to C-terminus: DNA polymerase alpha catalytic subunit (1488 aa).

Disordered stretches follow at residues 1-22 (MSES…GRFA), 79-124 (LRDF…TGKA), and 236-325 (FFSS…ESED). Residues 83 to 93 (FEDEDEYSDGE) are compositionally biased toward acidic residues. The Nuclear localization signal signature appears at 96-103 (RKDSKKKK). Residues 99–113 (SKKKKGVAPNSKKRP) show a composition bias toward basic residues. Position 239 is a phosphoserine (Ser-239). Residues 242–258 (IKKEPMPEKTPAKKATE) are compositionally biased toward basic and acidic residues. Positions 260–278 (PFSDNEMDFSCLDDDENQF) are enriched in acidic residues. Phosphoserine occurs at positions 262 and 269. Residues 286–303 (TEKVSQTKTAAEKTSQSK) show a composition bias toward polar residues. Residues 304-325 (VAEKSAPKKETTGSPKESESED) show a composition bias toward basic and acidic residues. Thr-314 is modified (phosphothreonine). A Phosphoserine modification is found at Ser-317. The interval 638 to 758 (DSERALLSWF…DLLEMYEKGE (121 aa)) is contains conserved residues essential for 3' -&gt; 5' exonuclease activities. 2 DNA-binding regions span residues 675-734 (QIVA…CKQV) and 1255-1380 (PTKF…RKKS). Zn(2+) contacts are provided by Cys-1296, Cys-1299, Cys-1324, Cys-1329, Cys-1362, Cys-1367, Cys-1385, and Cys-1388. The CysA-type zinc finger occupies 1296 to 1327 (CVTCKTEQLMASAYRPGPSNSHIAVLQQCAKS). The CysB motif motif lies at 1362–1388 (CDHPDCNFNTRTHSLRKKSHRPLCQKC).

The protein belongs to the DNA polymerase type-B family. As to quaternary structure, component of the alpha DNA polymerase complex (also known as the alpha DNA polymerase-primase complex) consisting of four subunits: the catalytic subunit PolA1, the regulatory subunit PolA2, and the primase complex subunits Prim1 and Prim2 respectively. PolA1 associates with the DNA primase complex before association with PolA2. Interacts with Dpit47; the interaction inhibits the activity of the DNA polymerase and occurs only in proliferating cells but not in quiescent cells. In embryos, a cleaved form of 130 kDa is produced up to cycle 14 and then disappears. Expressed in embryos (at protein level).

The protein localises to the nucleus. It catalyses the reaction DNA(n) + a 2'-deoxyribonucleoside 5'-triphosphate = DNA(n+1) + diphosphate. Inhibited by N2-(p-n-butylphenyl) deoxyguanosine 5'-triphosphate and N2-(p-n-butylphenyl) deoxyadenosine 5'-triphosphate. DNA synthesis is not inhibited by fungal toxin alpha-amaitin. The 3'-5' exonuclease activity is inhibited by 10mM dGMP. In terms of biological role, catalytic subunit of the DNA polymerase alpha complex (also known as the alpha DNA polymerase-primase complex) which plays an essential role in the initiation of DNA synthesis. During the S phase of the cell cycle, the DNA polymerase alpha complex (composed of a catalytic subunit PolA1, an accessory subunit PolA2 and two primase subunits, the catalytic subunit Prim1 and the regulatory subunit Prim2) is recruited to DNA at the replicative forks. The primase subunit of the polymerase alpha complex initiates DNA synthesis by oligomerising short RNA primers on both leading and lagging strands. These primers are initially extended by the polymerase alpha catalytic subunit and subsequently transferred to polymerase delta and polymerase epsilon for processive synthesis on the lagging and leading strand, respectively. In addition to polymerase activity, exhibits 3' to 5' exonuclease activity. The sequence is that of DNA polymerase alpha catalytic subunit from Drosophila melanogaster (Fruit fly).